The chain runs to 266 residues: Hydroxyethylthiazole kinase (266 aa).

Met41 contributes to the substrate binding site. The ATP site is built by Arg117 and Ser163. Substrate is bound at residue Ala190.

The protein belongs to the Thz kinase family. The cofactor is Mg(2+).

It catalyses the reaction 5-(2-hydroxyethyl)-4-methylthiazole + ATP = 4-methyl-5-(2-phosphooxyethyl)-thiazole + ADP + H(+). The protein operates within cofactor biosynthesis; thiamine diphosphate biosynthesis; 4-methyl-5-(2-phosphoethyl)-thiazole from 5-(2-hydroxyethyl)-4-methylthiazole: step 1/1. Its function is as follows. Catalyzes the phosphorylation of the hydroxyl group of 4-methyl-5-beta-hydroxyethylthiazole (THZ). The polypeptide is Hydroxyethylthiazole kinase (Histophilus somni (strain 129Pt) (Haemophilus somnus)).